The primary structure comprises 616 residues: UvrABC system protein C (616 aa).

One can recognise a GIY-YIG domain in the interval 21–100 (TCPGVYQFKN…IKDLKPRYNI (80 aa)). Residues 214–249 (GALIRTLSAEMHRYADELRFEEAAELKIQIEGLRKY) form the UVR domain.

It belongs to the UvrC family. As to quaternary structure, interacts with UvrB in an incision complex.

The protein resides in the cytoplasm. Its function is as follows. The UvrABC repair system catalyzes the recognition and processing of DNA lesions. UvrC both incises the 5' and 3' sides of the lesion. The N-terminal half is responsible for the 3' incision and the C-terminal half is responsible for the 5' incision. The protein is UvrABC system protein C of Prosthecochloris aestuarii (strain DSM 271 / SK 413).